We begin with the raw amino-acid sequence, 193 residues long: Rho-related GTP-binding protein RhoA-A (193 aa).

GTP is bound by residues 12-19 (GDGACGKT), 30-37 (FPEVYVPT), 59-63 (DTAGQ), 117-120 (NKKD), and 160-162 (SAK). (Microbial infection) O-linked (GlcNAc) tyrosine; by Yersinia Afp18 glycosylation is present at Tyr34. The residue at position 190 (Cys190) is a Cysteine methyl ester. The S-geranylgeranyl cysteine moiety is linked to residue Cys190. A propeptide spans 191–193 (ALL) (removed in mature form).

The protein belongs to the small GTPase superfamily. Rho family. In terms of processing, (Microbial infection) Glycosylated at Tyr-34 by Yersinia ruckeri toxin Afp18. Mono-O-GlcNAcylation by Afp18 inhibits RhoA activation by guanine nucleotide exchange factors and blocks RhoA signaling.

It is found in the cell membrane. Functionally, regulates a signal transduction pathway linking plasma membrane receptors to the assembly of focal adhesions and actin stress fibers. The protein is Rho-related GTP-binding protein RhoA-A of Danio rerio (Zebrafish).